We begin with the raw amino-acid sequence, 446 residues long: Exodeoxyribonuclease 7 large subunit (446 aa).

This sequence belongs to the XseA family. As to quaternary structure, heterooligomer composed of large and small subunits.

Its subcellular location is the cytoplasm. It catalyses the reaction Exonucleolytic cleavage in either 5'- to 3'- or 3'- to 5'-direction to yield nucleoside 5'-phosphates.. Its function is as follows. Bidirectionally degrades single-stranded DNA into large acid-insoluble oligonucleotides, which are then degraded further into small acid-soluble oligonucleotides. The chain is Exodeoxyribonuclease 7 large subunit from Staphylococcus carnosus (strain TM300).